The following is a 225-amino-acid chain: Superoxide dismutase [Mn], mitochondrial (225 aa).

The N-terminal 27 residues, 1-27, are a transit peptide targeting the mitochondrion; that stretch reads MITAITRTALPRATLRTSLATMSTIRA. Mn(2+)-binding residues include His-53, His-101, Asp-187, and His-191.

The protein belongs to the iron/manganese superoxide dismutase family. The cofactor is Mn(2+).

It localises to the mitochondrion. The protein localises to the cytoplasm. The enzyme catalyses 2 superoxide + 2 H(+) = H2O2 + O2. Its function is as follows. Destroys radicals which are normally produced within the cells and which are toxic to biological systems. In terms of biological role, destroys mitochondrial radicals produced by oxidative stress. Destroys cytoplasmic radicals produced in low copper environments; a condition which inactivates the cytoplasmic copper-dependent superoxide dismutase SOD1. The protein is Superoxide dismutase [Mn], mitochondrial of Cryptococcus neoformans var. grubii serotype A (strain H99 / ATCC 208821 / CBS 10515 / FGSC 9487) (Filobasidiella neoformans var. grubii).